A 308-amino-acid polypeptide reads, in one-letter code: Aspartate carbamoyltransferase catalytic subunit (308 aa).

The carbamoyl phosphate site is built by arginine 50 and threonine 51. Lysine 78 contributes to the L-aspartate binding site. Residues arginine 100, histidine 131, and glutamine 134 each contribute to the carbamoyl phosphate site. L-aspartate-binding residues include arginine 164 and arginine 216. The carbamoyl phosphate site is built by alanine 259 and proline 260.

The protein belongs to the aspartate/ornithine carbamoyltransferase superfamily. ATCase family. Heterododecamer (2C3:3R2) of six catalytic PyrB chains organized as two trimers (C3), and six regulatory PyrI chains organized as three dimers (R2).

The catalysed reaction is carbamoyl phosphate + L-aspartate = N-carbamoyl-L-aspartate + phosphate + H(+). It participates in pyrimidine metabolism; UMP biosynthesis via de novo pathway; (S)-dihydroorotate from bicarbonate: step 2/3. In terms of biological role, catalyzes the condensation of carbamoyl phosphate and aspartate to form carbamoyl aspartate and inorganic phosphate, the committed step in the de novo pyrimidine nucleotide biosynthesis pathway. The polypeptide is Aspartate carbamoyltransferase catalytic subunit (Oenococcus oeni (strain ATCC BAA-331 / PSU-1)).